The chain runs to 389 residues: Zip homologous protein 3 (389 aa).

An RING-type zinc finger spans residues 6–43 (CNKCFNRKPPDGFFISSCFHIFCTKCAKADLAVCLICK). Positions 123 to 164 (LAEATAWIQMAEKKLQASEEERVKAEREIEECQAKLKSMTNL) form a coiled coil. The segment at 366–389 (ISSQPGYLAQRKPINGRSFIGPAD) is disordered.

As to quaternary structure, interacts with zhp-4; the interaction is required for their localization along paired chromosomes and stability, and for the formation of chiasma during meiotic recombination. As to expression, expressed througout the gonad (at protein level). Expressed in the germline.

The protein resides in the chromosome. Recruited co-dependently with zhp-4 to the synaptonemal complex between homologous chromosome pairs to regulate the formation and number of crossover events between homologs during meiotic recombination. In the early stages of pachytene, in complex with zhp-4, recruited by the zhp-1-zhp-2 heterodimer to designated crossover sites along the homolog pair to stabilize other pro-crossover factors such as rmh-1, msh-5 and cosa-1. This in turn facilitates crossover and promotes the formation of chiasma in each meiotic nucleus at the late pachytene stage of meiosis. Plays a role in the segregation of homologous chromosomes following the completion of crossovers. Together with him-14 and msh-5 plays a role in the activation of DNA damage-dependent apoptosis at the DNA damage checkpoint in pachytene cells. This Caenorhabditis elegans protein is Zip homologous protein 3.